We begin with the raw amino-acid sequence, 448 residues long: 5-hydroxytryptamine receptor 7 (448 aa).

At 1 to 86 the chain is on the extracellular side; sequence MMDVNSSGRP…INYGRVEKVV (86 aa). N-linked (GlcNAc...) asparagine glycans are attached at residues Asn-5 and Asn-69. The helical transmembrane segment at 87–111 threads the bilayer; sequence IGSILTLITLLTIAGNCLVVISVCF. At 112–121 the chain is on the cytoplasmic side; sequence VKKLRQPSNY. The chain crosses the membrane as a helical span at residues 122 to 143; it reads LIVSLALADLSVAVAVMPFVSV. The Extracellular portion of the chain corresponds to 144–155; it reads TDLIGGKWIFGH. A helical transmembrane segment spans residues 156–181; the sequence is FFCNVFIAMDVMCCTASIMTLCVISI. Cys-158 and Cys-234 are disulfide-bonded. Asp-165 is a serotonin binding site. Residues 182-201 lie on the Cytoplasmic side of the membrane; that stretch reads DRYLGITRPLTYPVRQNGKC. The helical transmembrane segment at 202 to 222 threads the bilayer; sequence MAKMILSVWLLSASITLPPLF. Residues 223-240 are Extracellular-facing; it reads GWAQNVNDDKVCLISQDF. Residues 241 to 263 form a helical membrane-spanning segment; sequence GYTIYSTAVAFYIPMSVMLFMYY. Topologically, residues 264 to 329 are cytoplasmic; that stretch reads QIYKAARKSA…SIFKREQKAA (66 aa). The helical transmembrane segment at 330-355 threads the bilayer; it reads TTLGIIVGAFTVCWLPFFLLSTARPF. The Extracellular segment spans residues 356–366; the sequence is ICGTSCSCIPL. A helical membrane pass occupies residues 367–390; sequence WVERTCLWLGYANSLINPFIYAFF. The Cytoplasmic portion of the chain corresponds to 391 to 448; sequence NRDLRTTYRSLLQCQYRNINRKLSAAGMHEALKLAERPERSEFVLQNCDHCGKKGHDT. A lipid anchor (S-palmitoyl cysteine) is attached at Cys-404.

Belongs to the G-protein coupled receptor 1 family.

Its subcellular location is the cell membrane. Its function is as follows. G-protein coupled receptor for 5-hydroxytryptamine (serotonin), a biogenic hormone that functions as a neurotransmitter, a hormone and a mitogen. Ligand binding causes a conformation change that triggers signaling via guanine nucleotide-binding proteins (G proteins) and modulates the activity of downstream effectors. HTR7 is coupled to G(s) G alpha proteins and mediates activation of adenylate cyclase activity. The sequence is that of 5-hydroxytryptamine receptor 7 (Htr7) from Mus musculus (Mouse).